The following is a 117-amino-acid chain: uncharacterized protein (117 aa).

The disordered stretch occupies residues 1 to 20; it reads METKKLIGKPLQPARPVRHL.

This is an uncharacterized protein from Homo sapiens (Human).